Here is an 878-residue protein sequence, read N- to C-terminus: Alanine--tRNA ligase (878 aa).

Zn(2+) is bound by residues His-567, His-571, Cys-669, and His-673. The disordered stretch occupies residues Ala-841–Pro-860.

Belongs to the class-II aminoacyl-tRNA synthetase family. Requires Zn(2+) as cofactor.

It is found in the cytoplasm. It carries out the reaction tRNA(Ala) + L-alanine + ATP = L-alanyl-tRNA(Ala) + AMP + diphosphate. Functionally, catalyzes the attachment of alanine to tRNA(Ala) in a two-step reaction: alanine is first activated by ATP to form Ala-AMP and then transferred to the acceptor end of tRNA(Ala). Also edits incorrectly charged Ser-tRNA(Ala) and Gly-tRNA(Ala) via its editing domain. This Solibacter usitatus (strain Ellin6076) protein is Alanine--tRNA ligase.